A 286-amino-acid chain; its full sequence is NH(3)-dependent NAD(+) synthetase (286 aa).

51–58 (GISGGVDS) serves as a coordination point for ATP. Position 57 (aspartate 57) interacts with Mg(2+). Arginine 148 contacts deamido-NAD(+). Threonine 168 is an ATP binding site. Residue glutamate 173 participates in Mg(2+) binding. The deamido-NAD(+) site is built by lysine 181 and aspartate 188. Residues lysine 197 and threonine 219 each contribute to the ATP site. 268–269 (HK) contributes to the deamido-NAD(+) binding site.

Belongs to the NAD synthetase family. As to quaternary structure, homodimer.

The catalysed reaction is deamido-NAD(+) + NH4(+) + ATP = AMP + diphosphate + NAD(+) + H(+). It functions in the pathway cofactor biosynthesis; NAD(+) biosynthesis; NAD(+) from deamido-NAD(+) (ammonia route): step 1/1. Functionally, catalyzes the ATP-dependent amidation of deamido-NAD to form NAD. Uses ammonia as a nitrogen source. The polypeptide is NH(3)-dependent NAD(+) synthetase (Paraburkholderia phytofirmans (strain DSM 17436 / LMG 22146 / PsJN) (Burkholderia phytofirmans)).